A 193-amino-acid chain; its full sequence is ATP-dependent Clp protease proteolytic subunit (193 aa).

Catalysis depends on Ser98, which acts as the Nucleophile. His123 is an active-site residue.

It belongs to the peptidase S14 family. Fourteen ClpP subunits assemble into 2 heptameric rings which stack back to back to give a disk-like structure with a central cavity, resembling the structure of eukaryotic proteasomes.

It is found in the cytoplasm. It catalyses the reaction Hydrolysis of proteins to small peptides in the presence of ATP and magnesium. alpha-casein is the usual test substrate. In the absence of ATP, only oligopeptides shorter than five residues are hydrolyzed (such as succinyl-Leu-Tyr-|-NHMec, and Leu-Tyr-Leu-|-Tyr-Trp, in which cleavage of the -Tyr-|-Leu- and -Tyr-|-Trp bonds also occurs).. Cleaves peptides in various proteins in a process that requires ATP hydrolysis. Has a chymotrypsin-like activity. Plays a major role in the degradation of misfolded proteins. The polypeptide is ATP-dependent Clp protease proteolytic subunit (Glaesserella parasuis serovar 5 (strain SH0165) (Haemophilus parasuis)).